A 166-amino-acid chain; its full sequence is Regulatory protein RecX (166 aa).

Belongs to the RecX family.

The protein resides in the cytoplasm. Its function is as follows. Modulates RecA activity. The sequence is that of Regulatory protein RecX from Escherichia coli O139:H28 (strain E24377A / ETEC).